The chain runs to 360 residues: Peptide chain release factor 1 (360 aa).

N5-methylglutamine is present on Gln237.

This sequence belongs to the prokaryotic/mitochondrial release factor family. Methylated by PrmC. Methylation increases the termination efficiency of RF1.

The protein resides in the cytoplasm. Its function is as follows. Peptide chain release factor 1 directs the termination of translation in response to the peptide chain termination codons UAG and UAA. The sequence is that of Peptide chain release factor 1 from Saccharophagus degradans (strain 2-40 / ATCC 43961 / DSM 17024).